The primary structure comprises 504 residues: DNA-binding protein reb1 (504 aa).

A disordered region spans residues Asp30 to Ile51. 2 consecutive HTH myb-type domains span residues Asn308–Asp361 and Lys362–Ser422. 2 DNA-binding regions (H-T-H motif) span residues Trp335–Val357 and Trp395–Thr418.

The protein localises to the nucleus. In terms of biological role, DNA-binding protein that recognizes sites within both the enhancer and the promoter of rRNA transcription, as well as upstream of many genes transcribed by RNA polymerase II. Has a role in the termination of RNA polymerase I catalyzed transcription. The sequence is that of DNA-binding protein reb1 (reb1) from Schizosaccharomyces pombe (strain 972 / ATCC 24843) (Fission yeast).